We begin with the raw amino-acid sequence, 424 residues long: Probable methyltransferase EP424R (424 aa).

The region spanning 103 to 315 (QIVTNAWLKM…TYIVGKNRLR (213 aa)) is the Adrift-type SAM-dependent 2'-O-MTase domain. S-adenosyl-L-methionine contacts are provided by Gly135 and Asp228. The active-site Proton acceptor is Lys268.

It is found in the virion. In Ornithodoros (relapsing fever ticks), this protein is Probable methyltransferase EP424R.